Here is a 524-residue protein sequence, read N- to C-terminus: Peptide chain release factor 3 (524 aa).

The tr-type G domain occupies 9–275 (SRRRTFAIIS…AVVDLSPPPI (267 aa)). Residues 18 to 25 (SHPDAGKT), 86 to 90 (DTPGH), and 140 to 143 (NKLD) each bind GTP.

The protein belongs to the TRAFAC class translation factor GTPase superfamily. Classic translation factor GTPase family. PrfC subfamily.

It localises to the cytoplasm. In terms of biological role, increases the formation of ribosomal termination complexes and stimulates activities of RF-1 and RF-2. It binds guanine nucleotides and has strong preference for UGA stop codons. It may interact directly with the ribosome. The stimulation of RF-1 and RF-2 is significantly reduced by GTP and GDP, but not by GMP. The polypeptide is Peptide chain release factor 3 (Dechloromonas aromatica (strain RCB)).